The following is a 184-amino-acid chain: NADH-quinone oxidoreductase subunit B (184 aa).

Positions 37, 38, 103, and 132 each coordinate [4Fe-4S] cluster.

This sequence belongs to the complex I 20 kDa subunit family. NDH-1 is composed of 14 different subunits. Subunits NuoB, C, D, E, F, and G constitute the peripheral sector of the complex. Requires [4Fe-4S] cluster as cofactor.

It localises to the cell membrane. The enzyme catalyses a quinone + NADH + 5 H(+)(in) = a quinol + NAD(+) + 4 H(+)(out). NDH-1 shuttles electrons from NADH, via FMN and iron-sulfur (Fe-S) centers, to quinones in the respiratory chain. The immediate electron acceptor for the enzyme in this species is believed to be a menaquinone. Couples the redox reaction to proton translocation (for every two electrons transferred, four hydrogen ions are translocated across the cytoplasmic membrane), and thus conserves the redox energy in a proton gradient. The protein is NADH-quinone oxidoreductase subunit B of Beutenbergia cavernae (strain ATCC BAA-8 / DSM 12333 / CCUG 43141 / JCM 11478 / NBRC 16432 / NCIMB 13614 / HKI 0122).